An 855-amino-acid polypeptide reads, in one-letter code: Coiled-coil domain-containing protein 87 (855 aa).

2 disordered regions span residues 23–43 and 278–302; these read LFPS…QDAT and SRPS…PTSP. Over residues 287–296 the composition is skewed to low complexity; it reads PSHSPSSESH. Coiled coils occupy residues 387 to 413 and 764 to 789; these read TRRL…EASG and RSYL…ESVF.

It belongs to the CCDC87 family. Specifically expressed in testis (at protein level). Not detected in other tissues tested (at protein level). In the testis, localizes to pachytene spermatocytes and spermatids.

In terms of biological role, plays a role in spermatogenesis, where it is important for normal sperm head morphology. Also required for the acrosome reaction and thus normal male fertility. The polypeptide is Coiled-coil domain-containing protein 87 (Ccdc87) (Mus musculus (Mouse)).